Here is a 382-residue protein sequence, read N- to C-terminus: Transcription termination/antitermination protein NusA (382 aa).

An S1 motif domain is found at 135–199 (EDIMTGIVQR…KGPQIMISRT (65 aa)). One can recognise a KH domain in the interval 301–367 (EKTTQVIVPD…TLALDQETAD (67 aa)). The interval 348 to 382 (LLEDEAASHETLALDQETADQPEATVETSKNHEEE) is disordered.

This sequence belongs to the NusA family. Monomer. Binds directly to the core enzyme of the DNA-dependent RNA polymerase and to nascent RNA.

It is found in the cytoplasm. Its function is as follows. Participates in both transcription termination and antitermination. In Halalkalibacterium halodurans (strain ATCC BAA-125 / DSM 18197 / FERM 7344 / JCM 9153 / C-125) (Bacillus halodurans), this protein is Transcription termination/antitermination protein NusA.